A 294-amino-acid chain; its full sequence is MTIFKKVTTMISWVLLACALPCAADPMLGAFARRDFQKGGPQLVCSLPGPQGPPGPPGAPGSSGVVGRMGFPGKDGQDGQDGDRGDSGEEGPPGRTGNRGKQGPKGKAGAIGRAGPRGPKGVSGTPGKHGTPGKKGPKGKKGEPGLPGPCSCGSSRAKSAFSVAVTKSYPRERLPIKFDKILMNEGGHYNASSGKFVCSVPGIYYFTYDITLANKHLAIGLVHNGQYRIRTFDANTGNHDVASGSTILALKEGDEVWLQIFYSEQNGLFYDPYWTDSLFTGFLIYADQGDPNEV.

A signal peptide spans 1–24; the sequence is MTIFKKVTTMISWVLLACALPCAA. Positions 42-156 are disordered; the sequence is QLVCSLPGPQ…PGPCSCGSSR (115 aa). A Collagen-like domain is found at 48-150; it reads PGPQGPPGPP…KGEPGLPGPC (103 aa). Residues 50–59 show a composition bias toward pro residues; the sequence is PQGPPGPPGA. The segment covering 75-87 has biased composition (basic and acidic residues); the sequence is DGQDGQDGDRGDS. The span at 105–129 shows a compositional bias: low complexity; that stretch reads KGKAGAIGRAGPRGPKGVSGTPGKH. The 137-residue stretch at 154-290 folds into the C1q domain; the sequence is SSRAKSAFSV…GFLIYADQGD (137 aa).

May interact with ERFE.

Its subcellular location is the secreted. Its function is as follows. Involved in the regulation of lipid metabolism in adipose tissue and liver. The polypeptide is Complement C1q tumor necrosis factor-related protein 2 (C1qtnf2) (Mus musculus (Mouse)).